The chain runs to 89 residues: Small ribosomal subunit protein uS19 (89 aa).

The protein belongs to the universal ribosomal protein uS19 family.

Its function is as follows. Protein S19 forms a complex with S13 that binds strongly to the 16S ribosomal RNA. The sequence is that of Small ribosomal subunit protein uS19 from Phocaeicola vulgatus (strain ATCC 8482 / DSM 1447 / JCM 5826 / CCUG 4940 / NBRC 14291 / NCTC 11154) (Bacteroides vulgatus).